We begin with the raw amino-acid sequence, 248 residues long: 14-3-3-like protein G-BOX factor 14 kappa (248 aa).

Phosphoserine occurs at positions 70, 112, and 193. A Phosphothreonine modification is found at Thr-214.

This sequence belongs to the 14-3-3 family. Interacts with the isocitrate dehydrogenase IDH3, and malate dehydrogenases MDH1 and MDH2. Interacts with CINV1.

The protein resides in the nucleus. It is found in the cytoplasm. Is associated with a DNA binding complex that binds to the G box, a well-characterized cis-acting DNA regulatory element found in plant genes. Involved in the regulation of nutrient metabolism. Negative regulator of freezing tolerance that modulates cold-responsive C-repeat-binding factors (CBF) DREB1A AND DREB1B proteins stability by facilitating their ubiquitin-mediated degradation; this processus is counteracted by B1L. In Arabidopsis thaliana (Mouse-ear cress), this protein is 14-3-3-like protein G-BOX factor 14 kappa.